We begin with the raw amino-acid sequence, 802 residues long: Copper-exporting P-type ATPase (802 aa).

HMA domains lie at 5–70 and 72–138; these read KKTT…YGVA and ETVE…YDAS. Residues Cys16, Cys19, Cys83, and Cys86 each coordinate Cu(+). A run of 6 helical transmembrane segments spans residues 161–181, 192–212, 224–244, 256–276, 411–431, and 438–458; these read LIIS…HLFN, WFQF…FYVG, MDVL…YEMI, LYFE…YLEA, YFVP…ITLV, and PALV…LGLA. Asp495 acts as the 4-aspartylphosphate intermediate in catalysis. Mg(2+)-binding residues include Asp690 and Asp694. 2 helical membrane-spanning segments follow: residues 748–767 and 771–790; these read LFWA…LGLL and VAGA…ALRL.

This sequence belongs to the cation transport ATPase (P-type) (TC 3.A.3) family. Type IB subfamily.

The protein localises to the cell membrane. The enzyme catalyses Cu(+)(in) + ATP + H2O = Cu(+)(out) + ADP + phosphate + H(+). Involved in copper export. The sequence is that of Copper-exporting P-type ATPase (copA) from Staphylococcus aureus (strain bovine RF122 / ET3-1).